A 458-amino-acid polypeptide reads, in one-letter code: Estrogen-related receptor gamma (458 aa).

Residue K40 forms a Glycyl lysine isopeptide (Lys-Gly) (interchain with G-Cter in SUMO) linkage. Residues 42 to 52 (EPSSPASLTDS) show a composition bias toward polar residues. The tract at residues 42–85 (EPSSPASLTDSVNHHSPGGSSDASGSYSSTMNGHQNGLDSPPLY) is disordered. S45 is modified (phosphoserine). Positions 57–70 (SPGGSSDASGSYSS) are enriched in low complexity. A DNA-binding region (nuclear receptor) is located at residues 125 to 200 (KRLCLVCGDI…VGMLKEGVRL (76 aa)). 2 NR C4-type zinc fingers span residues 128-148 (CLVC…CEAC) and 164-188 (CPAT…FMKC). The region spanning 233 to 457 (PYNKIVSHLL…KLFLEMLEAK (225 aa)) is the NR LBD domain.

It belongs to the nuclear hormone receptor family. NR3 subfamily. In terms of assembly, homodimer. Binds TLE1, PNRC1 and PNRC2. Binds GRIP1. Interacts with NRIP1, NCOA1 and NCOR2. Post-translationally, acetylated by PCAF/KAT2 (in vitro). Sumoylation on Lys-40 is enhanced by phosphorylation at Ser-45 and represses transcriptional activity. In terms of processing, phosphorylation on Ser-45 enhances sumoylation on Lys-40 thus repressing transcriptional activity. In terms of tissue distribution, expressed in the heart, kidney, brain, lung, bone marrow, adrenal gland, trachea, spinal cord and thyroid gland.

It localises to the nucleus. In terms of biological role, orphan receptor that acts as a transcription activator in the absence of bound ligand. Binds specifically to an estrogen response element and activates reporter genes controlled by estrogen response elements. Induces the expression of PERM1 in the skeletal muscle. The protein is Estrogen-related receptor gamma (ESRRG) of Homo sapiens (Human).